Here is a 380-residue protein sequence, read N- to C-terminus: Tubulin alpha chain (380 aa).

Residues glutamate 46, serine 115, glycine 119, threonine 120, threonine 154, asparagine 181, and asparagine 202 each contribute to the GTP site. Glutamate 46 provides a ligand contact to Mg(2+). Glutamate 228 is an active-site residue.

The protein belongs to the tubulin family. In terms of assembly, dimer of alpha and beta chains. A typical microtubule is a hollow water-filled tube with an outer diameter of 25 nm and an inner diameter of 15 nM. Alpha-beta heterodimers associate head-to-tail to form protofilaments running lengthwise along the microtubule wall with the beta-tubulin subunit facing the microtubule plus end conferring a structural polarity. Microtubules usually have 13 protofilaments but different protofilament numbers can be found in some organisms and specialized cells. Requires Mg(2+) as cofactor.

Its subcellular location is the cytoplasm. It localises to the cytoskeleton. It carries out the reaction GTP + H2O = GDP + phosphate + H(+). In terms of biological role, tubulin is the major constituent of microtubules, a cylinder consisting of laterally associated linear protofilaments composed of alpha- and beta-tubulin heterodimers. Microtubules grow by the addition of GTP-tubulin dimers to the microtubule end, where a stabilizing cap forms. Below the cap, tubulin dimers are in GDP-bound state, owing to GTPase activity of alpha-tubulin. This is Tubulin alpha chain (TUB1) from Encephalitozoon hellem (Microsporidian parasite).